The sequence spans 666 residues: Long chain acyl-CoA synthetase 5 (666 aa).

228–239 (IMYTSGTTGDPK) provides a ligand contact to ATP. The tract at residues 495–519 (DGWLHTGDVGEWQPNGSMKIIDRKK) is fatty acid-binding.

Belongs to the ATP-dependent AMP-binding enzyme family. The cofactor is Mg(2+).

The catalysed reaction is a long-chain fatty acid + ATP + CoA = a long-chain fatty acyl-CoA + AMP + diphosphate. The protein operates within lipid metabolism; fatty acid metabolism. Its function is as follows. Activation of long-chain fatty acids for both synthesis of cellular lipids, and degradation via beta-oxidation. Preferentially uses palmitate, palmitoleate, oleate and linoleate. The polypeptide is Long chain acyl-CoA synthetase 5 (LACS5) (Arabidopsis thaliana (Mouse-ear cress)).